The primary structure comprises 238 residues: Flagellar L-ring protein (238 aa).

A signal peptide spans 1–23; sequence MVKLFSYKIKYYLTAFFIIIIQS. The N-palmitoyl cysteine moiety is linked to residue Cys24. A lipid anchor (S-diacylglycerol cysteine) is attached at Cys24.

The protein belongs to the FlgH family. As to quaternary structure, the basal body constitutes a major portion of the flagellar organelle and consists of four rings (L,P,S, and M) mounted on a central rod.

It is found in the cell outer membrane. The protein resides in the bacterial flagellum basal body. In terms of biological role, assembles around the rod to form the L-ring and probably protects the motor/basal body from shearing forces during rotation. This Buchnera aphidicola subsp. Schizaphis graminum (strain Sg) protein is Flagellar L-ring protein.